Here is a 663-residue protein sequence, read N- to C-terminus: Zyxin (663 aa).

The disordered stretch occupies residues proline 35–glycine 438. Pro residues-rich tracts occupy residues phenylalanine 122–leucine 148 and valine 160–valine 211. Positions proline 298 to lysine 314 are enriched in polar residues. Basic and acidic residues-rich tracts occupy residues glutamine 342–arginine 353 and glutamate 360–arginine 375. 2 stretches are compositionally biased toward polar residues: residues leucine 377 to glycine 393 and threonine 427 to glycine 438. 3 consecutive LIM zinc-binding domains span residues glutamate 470–cysteine 531, cysteine 532–alanine 589, and proline 590–alanine 660.

It belongs to the zyxin/ajuba family. In terms of assembly, interacts (via LIM2 domain) with hesx1/anf1. At the early gastrula stage, expressed at a low level in the animal hemisphere. Expression rises by the end of gastrulation in the anterior part of the embryo, where it gradually increases by the midneurula stage. During neurulation, expression continues most intensively in the anterior part of the neural plate and around it. At later stages, intensely expressed in the brain and at lower levels in the spinal cord, eyes, nasal placodes, within somites, and around the cement gland.

The protein localises to the cytoplasm. The protein resides in the cytoskeleton. Its subcellular location is the cell junction. It is found in the focal adhesion. Adhesion plaque protein. May be a component of a signal transduction pathway that mediates adhesion-stimulated changes in gene expression. Suppresses the transcription-repressing activity of hesx1/anf1. The sequence is that of Zyxin from Xenopus laevis (African clawed frog).